A 178-amino-acid chain; its full sequence is Large ribosomal subunit protein uL6 (178 aa).

The protein belongs to the universal ribosomal protein uL6 family. Part of the 50S ribosomal subunit.

In terms of biological role, this protein binds to the 23S rRNA, and is important in its secondary structure. It is located near the subunit interface in the base of the L7/L12 stalk, and near the tRNA binding site of the peptidyltransferase center. The chain is Large ribosomal subunit protein uL6 from Staphylococcus carnosus (strain TM300).